The sequence spans 355 residues: Anthocyanin synthase (355 aa).

The substrate site is built by tyrosine 145 and lysine 216. Positions 211–310 (LLLQMKINYY…RISWAVFCEP (100 aa)) constitute a Fe2OG dioxygenase domain. 218–220 (NYY) is a 2-oxoglutarate binding site. Histidine 235 contributes to the Fe cation binding site. Threonine 236 is a substrate binding site. The Fe cation site is built by aspartate 237 and histidine 291. 2-oxoglutarate-binding positions include arginine 301 and 301–303 (RIS). Residues glutamate 309 and lysine 344 each coordinate substrate.

This sequence belongs to the iron/ascorbate-dependent oxidoreductase family. It depends on L-ascorbate as a cofactor. Fe(2+) is required as a cofactor. In terms of tissue distribution, expressed in stems and leaves. Expressed at low levels in ovaries.

It catalyses the reaction a (2R,3S,4S)-leucoanthocyanidin + 2-oxoglutarate + O2 = a 4-H-anthocyanidin with a 3-hydroxy group + succinate + CO2 + 2 H2O. It functions in the pathway pigment biosynthesis; anthocyanin biosynthesis. In terms of biological role, involved in anthocyanin biosynthesis by catalyzing the oxidation of leucoanthocyanidins into anthocyanidins. Required for the accumulation of anthocyanin in red-fleshed kiwifruit varieties. The chain is Anthocyanin synthase from Actinidia chinensis var. chinensis (Chinese soft-hair kiwi).